A 410-amino-acid polypeptide reads, in one-letter code: Elongation factor Tu (410 aa).

The region spanning 10–214 (KPHVNIGTIG…EVDAYIPTPE (205 aa)) is the tr-type G domain. Residues 19-26 (GHVDHGKT) form a G1 region. 19–26 (GHVDHGKT) lines the GTP pocket. Thr-26 provides a ligand contact to Mg(2+). A G2 region spans residues 60–64 (GITIN). The G3 stretch occupies residues 81 to 84 (DCPG). GTP contacts are provided by residues 81–85 (DCPGH) and 136–139 (NKED). Residues 136–139 (NKED) are G4. Positions 174-176 (SAL) are G5.

This sequence belongs to the TRAFAC class translation factor GTPase superfamily. Classic translation factor GTPase family. EF-Tu/EF-1A subfamily. Monomer.

Its subcellular location is the cytoplasm. The enzyme catalyses GTP + H2O = GDP + phosphate + H(+). GTP hydrolase that promotes the GTP-dependent binding of aminoacyl-tRNA to the A-site of ribosomes during protein biosynthesis. In Gloeothece citriformis (strain PCC 7424) (Cyanothece sp. (strain PCC 7424)), this protein is Elongation factor Tu.